The sequence spans 595 residues: Acriflavine sensitivity control protein acr-2 (595 aa).

The segment at residues 22 to 49 is a DNA-binding region (zn(2)-C6 fungal-type); that stretch reads CYNCHRKRLRCDKSLPACLKCSINGEEC. A compositionally biased stretch (low complexity) spans 69-88; it reads TTRTTNKTNFNGTNTTTPRT. Residues 69–172 are disordered; the sequence is TTRTTNKTNF…PDDNPDPSSQ (104 aa). The span at 89-117 shows a compositional bias: polar residues; it reads VKSSTPTQAPTPSDSPRQLDTDVTSSSAP. Residues 118-138 show a composition bias toward low complexity; it reads SHTCSRSTTTSTTTTRISSPT.

The protein localises to the nucleus. Its function is as follows. Probable transcriptional regulator. The protein is Acriflavine sensitivity control protein acr-2 (acr-2) of Neurospora crassa (strain ATCC 24698 / 74-OR23-1A / CBS 708.71 / DSM 1257 / FGSC 987).